Consider the following 138-residue polypeptide: Small ribosomal subunit protein uS11c (138 aa).

The segment at Met-1–Ala-22 is disordered. A compositionally biased stretch (basic residues) spans Gly-9–Ala-22.

Belongs to the universal ribosomal protein uS11 family. Part of the 30S ribosomal subunit.

It localises to the plastid. It is found in the chloroplast. In Populus alba (White poplar), this protein is Small ribosomal subunit protein uS11c.